The primary structure comprises 1407 residues: DNA-directed RNA polymerase subunit beta' (1407 aa).

Cysteine 70, cysteine 72, cysteine 85, and cysteine 88 together coordinate Zn(2+). Residues aspartate 460, aspartate 462, and aspartate 464 each contribute to the Mg(2+) site. Cysteine 814, cysteine 888, cysteine 895, and cysteine 898 together coordinate Zn(2+).

The protein belongs to the RNA polymerase beta' chain family. In terms of assembly, the RNAP catalytic core consists of 2 alpha, 1 beta, 1 beta' and 1 omega subunit. When a sigma factor is associated with the core the holoenzyme is formed, which can initiate transcription. It depends on Mg(2+) as a cofactor. The cofactor is Zn(2+).

It carries out the reaction RNA(n) + a ribonucleoside 5'-triphosphate = RNA(n+1) + diphosphate. DNA-dependent RNA polymerase catalyzes the transcription of DNA into RNA using the four ribonucleoside triphosphates as substrates. The sequence is that of DNA-directed RNA polymerase subunit beta' from Salmonella arizonae (strain ATCC BAA-731 / CDC346-86 / RSK2980).